The primary structure comprises 203 residues: Recombination protein RecR (203 aa).

A C4-type zinc finger spans residues 56 to 71 (CAVCGNVSDDERCRIC). One can recognise a Toprim domain in the interval 79–179 (SVVCVVEEPK…TVTRIASGLP (101 aa)).

This sequence belongs to the RecR family.

May play a role in DNA repair. It seems to be involved in an RecBC-independent recombinational process of DNA repair. It may act with RecF and RecO. This Mycobacterium avium (strain 104) protein is Recombination protein RecR.